The sequence spans 353 residues: (3aS,4S,5R,7aS)-5-hydroxy-7a-methyl-1-oxo-octahydro-1H-indene-4-carboxyl-CoA dehydrogenase (353 aa).

FMN-binding positions include 22-24, 171-173, and 194-195; these read GMG, AGG, and GT.

This sequence belongs to the nitronate monooxygenase family.

It carries out the reaction (3aS,4S,5R,7aS)-5-hydroxy-7a-methyl-1-oxo-octahydro-1H-indene-4-carboxyl-CoA + NAD(+) = (5R,7aS)-5-hydroxy-7a-methyl-1-oxo-2,3,5,6,7,7a-hexahydro-1H-indene-carboxyl-CoA + NADH + H(+). It functions in the pathway steroid metabolism; cholesterol degradation. Functionally, involved in the final steps of cholesterol and steroid degradation. Probably catalyzes the introduction of a double bound into the C ring of 5OH-HIC-CoA, leading to the formation of (5R,7aS)-5-hydroxy-7a-methyl-1-oxo-3,5,6,7-tetrahydro-2H-indene-4-carboxyl-CoA. The chain is (3aS,4S,5R,7aS)-5-hydroxy-7a-methyl-1-oxo-octahydro-1H-indene-4-carboxyl-CoA dehydrogenase from Rhodococcus jostii (strain RHA1).